The primary structure comprises 504 residues: Glycerol kinase (504 aa).

T12 lines the ADP pocket. 3 residues coordinate ATP: T12, T13, and S14. Residue T12 coordinates sn-glycerol 3-phosphate. Residue R16 coordinates ADP. Sn-glycerol 3-phosphate contacts are provided by R82, E83, Y134, and D246. Residues R82, E83, Y134, D246, and Q247 each contribute to the glycerol site. ADP-binding residues include T268 and G312. ATP-binding residues include T268, G312, Q316, and G413. 2 residues coordinate ADP: G413 and N417.

The protein belongs to the FGGY kinase family.

The enzyme catalyses glycerol + ATP = sn-glycerol 3-phosphate + ADP + H(+). It participates in polyol metabolism; glycerol degradation via glycerol kinase pathway; sn-glycerol 3-phosphate from glycerol: step 1/1. Inhibited by fructose 1,6-bisphosphate (FBP). Functionally, key enzyme in the regulation of glycerol uptake and metabolism. Catalyzes the phosphorylation of glycerol to yield sn-glycerol 3-phosphate. The chain is Glycerol kinase from Pseudarthrobacter chlorophenolicus (strain ATCC 700700 / DSM 12829 / CIP 107037 / JCM 12360 / KCTC 9906 / NCIMB 13794 / A6) (Arthrobacter chlorophenolicus).